A 360-amino-acid polypeptide reads, in one-letter code: Glyceraldehyde-3-phosphate dehydrogenase (360 aa).

Residues 13-14 (RI), aspartate 35, and arginine 82 contribute to the NAD(+) site. Residues 153-155 (SCT), threonine 184, 213-214 (TG), and arginine 236 contribute to the D-glyceraldehyde 3-phosphate site. Cysteine 154 acts as the Nucleophile in catalysis. Asparagine 318 is a binding site for NAD(+).

It belongs to the glyceraldehyde-3-phosphate dehydrogenase family. As to quaternary structure, homotetramer.

The catalysed reaction is D-glyceraldehyde 3-phosphate + phosphate + NAD(+) = (2R)-3-phospho-glyceroyl phosphate + NADH + H(+). Its pathway is carbohydrate degradation; glycolysis; pyruvate from D-glyceraldehyde 3-phosphate: step 1/5. Its function is as follows. Key enzyme in glycolysis that catalyzes the first step of the pathway by converting D-glyceraldehyde 3-phosphate (G3P) into 3-phospho-D-glyceroyl phosphate. Essential for the maintenance of cellular ATP levels and carbohydrate metabolism. In Atriplex nummularia (Old man saltbush), this protein is Glyceraldehyde-3-phosphate dehydrogenase.